The sequence spans 295 residues: Bifunctional protein FolD (295 aa).

Residues 166–168, S195, and I236 each bind NADP(+); that span reads GRS.

Belongs to the tetrahydrofolate dehydrogenase/cyclohydrolase family. In terms of assembly, homodimer.

It carries out the reaction (6R)-5,10-methylene-5,6,7,8-tetrahydrofolate + NADP(+) = (6R)-5,10-methenyltetrahydrofolate + NADPH. The catalysed reaction is (6R)-5,10-methenyltetrahydrofolate + H2O = (6R)-10-formyltetrahydrofolate + H(+). It participates in one-carbon metabolism; tetrahydrofolate interconversion. Its function is as follows. Catalyzes the oxidation of 5,10-methylenetetrahydrofolate to 5,10-methenyltetrahydrofolate and then the hydrolysis of 5,10-methenyltetrahydrofolate to 10-formyltetrahydrofolate. The chain is Bifunctional protein FolD from Chlorobium luteolum (strain DSM 273 / BCRC 81028 / 2530) (Pelodictyon luteolum).